The sequence spans 172 residues: Early nodulin-like protein 17 (172 aa).

Positions 1 to 26 are cleaved as a signal peptide; that stretch reads MARFTVLITAVVLAFLMAAPMPGVTA. The 101-residue stretch at 27–127 folds into the Phytocyanin domain; it reads KKYTVGENKF…GMKLSVKVEK (101 aa). 4 N-linked (GlcNAc...) asparagine glycosylation sites follow: asparagine 42, asparagine 73, asparagine 88, and asparagine 101. An intrachain disulfide couples cysteine 80 to cysteine 115. A lipid anchor (GPI-anchor amidated glycine) is attached at glycine 141. A propeptide spans 142–172 (removed in mature form); the sequence is SVSMVTGLAQFMIPVSLFAFPAMWDVISRMW.

Belongs to the early nodulin-like (ENODL) family.

The protein localises to the cell membrane. May act as a carbohydrate transporter. The chain is Early nodulin-like protein 17 from Arabidopsis thaliana (Mouse-ear cress).